A 644-amino-acid chain; its full sequence is Exoribonuclease 2 (644 aa).

The RNB domain maps to 189–516; sequence REDLTSLDFV…NHRLLKAVIK (328 aa). The S1 motif domain occupies 561 to 643; it reads GTRFAAEIVD…ETRSIIARPV (83 aa).

The protein belongs to the RNR ribonuclease family. RNase II subfamily.

It localises to the cytoplasm. It catalyses the reaction Exonucleolytic cleavage in the 3'- to 5'-direction to yield nucleoside 5'-phosphates.. Functionally, involved in mRNA degradation. Hydrolyzes single-stranded polyribonucleotides processively in the 3' to 5' direction. The protein is Exoribonuclease 2 of Shigella flexneri serotype 5b (strain 8401).